The sequence spans 126 residues: Large ribosomal subunit protein bL12 (126 aa).

The protein belongs to the bacterial ribosomal protein bL12 family. As to quaternary structure, homodimer. Part of the ribosomal stalk of the 50S ribosomal subunit. Forms a multimeric L10(L12)X complex, where L10 forms an elongated spine to which 2 to 4 L12 dimers bind in a sequential fashion. Binds GTP-bound translation factors.

Forms part of the ribosomal stalk which helps the ribosome interact with GTP-bound translation factors. Is thus essential for accurate translation. In Moorella thermoacetica (strain ATCC 39073 / JCM 9320), this protein is Large ribosomal subunit protein bL12.